The following is a 444-amino-acid chain: Exodeoxyribonuclease 7 large subunit (444 aa).

This sequence belongs to the XseA family. In terms of assembly, heterooligomer composed of large and small subunits.

The protein localises to the cytoplasm. The enzyme catalyses Exonucleolytic cleavage in either 5'- to 3'- or 3'- to 5'-direction to yield nucleoside 5'-phosphates.. Functionally, bidirectionally degrades single-stranded DNA into large acid-insoluble oligonucleotides, which are then degraded further into small acid-soluble oligonucleotides. The protein is Exodeoxyribonuclease 7 large subunit of Pseudoalteromonas atlantica (strain T6c / ATCC BAA-1087).